A 129-amino-acid polypeptide reads, in one-letter code: Small ribosomal subunit protein uS11 (129 aa).

It belongs to the universal ribosomal protein uS11 family. In terms of assembly, part of the 30S ribosomal subunit. Interacts with proteins S7 and S18. Binds to IF-3.

In terms of biological role, located on the platform of the 30S subunit, it bridges several disparate RNA helices of the 16S rRNA. Forms part of the Shine-Dalgarno cleft in the 70S ribosome. In Psychromonas ingrahamii (strain DSM 17664 / CCUG 51855 / 37), this protein is Small ribosomal subunit protein uS11.